The sequence spans 328 residues: Malate dehydrogenase (328 aa).

11 to 17 (GAAGQIG) lines the NAD(+) pocket. Positions 94 and 100 each coordinate substrate. NAD(+) contacts are provided by residues Asn-107, Gln-114, and 131–133 (VGN). Positions 133 and 164 each coordinate substrate. The Proton acceptor role is filled by His-189.

The protein belongs to the LDH/MDH superfamily. MDH type 2 family.

The catalysed reaction is (S)-malate + NAD(+) = oxaloacetate + NADH + H(+). Functionally, catalyzes the reversible oxidation of malate to oxaloacetate. This Xanthomonas oryzae pv. oryzae (strain PXO99A) protein is Malate dehydrogenase.